The following is a 144-amino-acid chain: PE family protein PE9 (144 aa).

The PE domain occupies 1–87; that stretch reads MSYMIATPAA…RTLTGGCGVF (87 aa). Residues 98 to 124 are disordered; that stretch reads AAEHRAAGAGRRQRRRRSGDGQWRLRQ.

The protein belongs to the mycobacterial PE family. As to quaternary structure, forms a complex with PE10. The complex interacts with human TLR4.

The protein localises to the secreted. Its subcellular location is the cell wall. It is found in the cell surface. Together with PE10, induces macrophage apoptosis through human Toll-like receptor 4 (TLR4) signaling pathway. Interaction with TLR4 leads to increased levels of phospho-IRF-3, increase in the transcript levels of IFN-beta and pro-apoptotic genes, up-regulation of IL-10, down-regulation of IL-1b and enhanced levels of macrophage apoptosis. The chain is PE family protein PE9 from Mycobacterium tuberculosis (strain ATCC 25618 / H37Rv).